The sequence spans 464 residues: Glutamate--tRNA ligase (464 aa).

Residues P11–G21 carry the 'HIGH' region motif. Positions K253 to R257 match the 'KMSKS' region motif. K256 is a binding site for ATP.

This sequence belongs to the class-I aminoacyl-tRNA synthetase family. Glutamate--tRNA ligase type 1 subfamily. As to quaternary structure, monomer.

The protein localises to the cytoplasm. It carries out the reaction tRNA(Glu) + L-glutamate + ATP = L-glutamyl-tRNA(Glu) + AMP + diphosphate. Its function is as follows. Catalyzes the attachment of glutamate to tRNA(Glu) in a two-step reaction: glutamate is first activated by ATP to form Glu-AMP and then transferred to the acceptor end of tRNA(Glu). The sequence is that of Glutamate--tRNA ligase from Metamycoplasma arthritidis (strain 158L3-1) (Mycoplasma arthritidis).